The chain runs to 216 residues: Vascular endothelial growth factor A (216 aa).

The first 26 residues, 1–26, serve as a signal peptide directing secretion; that stretch reads MNFLLTWIHWGLAALLYLQSAELSKA. Cystine bridges form between Cys52/Cys94, Cys83/Cys128, and Cys87/Cys130. Asn101 carries an N-linked (GlcNAc...) asparagine glycan. Over residues 132 to 141 the composition is skewed to basic and acidic residues; the sequence is PKKDVKNKQE. A disordered region spans residues 132–167; sequence PKKDVKNKQEKKSKRGKGKGQKRKRKKGRYKPPSFH. The span at 142–161 shows a compositional bias: basic residues; it reads KKSKRGKGKGQKRKRKKGRY.

It belongs to the PDGF/VEGF growth factor family. As to quaternary structure, homodimer; disulfide-linked. Also found as heterodimer with PGF.

Growth factor active in angiogenesis, vasculogenesis and endothelial cell growth. Induces endothelial cell proliferation, promotes cell migration, inhibits apoptosis and induces permeabilization of blood vessels. Binds to the FLT1/VEGFR1 and KDR/VEGFR2 receptors, heparan sulfate and heparin. This is Vascular endothelial growth factor A (VEGFA) from Gallus gallus (Chicken).